We begin with the raw amino-acid sequence, 869 residues long: 1-phosphatidylinositol 4,5-bisphosphate phosphodiesterase 1 (869 aa).

Positions 269 to 304 (VSTGQLLEFFQLADINHNGLLNYFEFEKFIKILKNR) constitute an EF-hand domain. Ca(2+)-binding residues include aspartate 282, asparagine 284, asparagine 286, and glutamate 293. The PI-PLC X-box domain maps to 382 to 520 (YSKPLNHYFI…LKHKILLKSK (139 aa)). Residues histidine 395 and histidine 439 contribute to the active site. Residues lysine 518 and lysine 520 each coordinate substrate. Residues 546 to 571 (ANEQELRMKDDSTNSSSATNSSSMQR) are disordered. The segment covering 558-568 (TNSSSATNSSS) has biased composition (low complexity). The PI-PLC Y-box domain maps to 590-709 (ISGIHGIKFR…SGYVLKPKKL (120 aa)). Residues serine 614 and arginine 643 each coordinate substrate. One can recognise a C2 domain in the interval 713-862 (VTKAKMIPLI…EGEQYIFCTL (150 aa)).

In terms of assembly, interacts with SGD1. Requires Ca(2+) as cofactor.

It carries out the reaction a 1,2-diacyl-sn-glycero-3-phospho-(1D-myo-inositol-4,5-bisphosphate) + H2O = 1D-myo-inositol 1,4,5-trisphosphate + a 1,2-diacyl-sn-glycerol + H(+). Its function is as follows. The production of the second messenger molecules diacylglycerol (DAG) and inositol 1,4,5-trisphosphate (IP3) is mediated by activated phosphatidylinositol-specific phospholipase C enzymes. Required for cell growth, osmoresistance and expression of GPD1. The chain is 1-phosphatidylinositol 4,5-bisphosphate phosphodiesterase 1 (PLC1) from Saccharomyces cerevisiae (strain ATCC 204508 / S288c) (Baker's yeast).